Consider the following 143-residue polypeptide: MNSIQLIIDIILILWLLILTVLYLRKKSLNLNIVKNKKIVRAKRYIVFYVIAESKVKSDDLERVVRNSLKDLLGNVWLNIANPKVVTYREDTQEGIISTNRIGYKAVLASLPFAKEINGNKILIVPRRTTGSLKKAKKLIGLK.

The protein belongs to the eukaryotic/archaeal RNase P protein component 2 family. In terms of assembly, consists of a catalytic RNA component and at least 4-5 protein subunits.

Its subcellular location is the cytoplasm. It catalyses the reaction Endonucleolytic cleavage of RNA, removing 5'-extranucleotides from tRNA precursor.. Its function is as follows. Part of ribonuclease P, a protein complex that generates mature tRNA molecules by cleaving their 5'-ends. In Saccharolobus islandicus (strain L.S.2.15 / Lassen #1) (Sulfolobus islandicus), this protein is Ribonuclease P protein component 2.